A 1037-amino-acid polypeptide reads, in one-letter code: Outer dynein arm-docking complex subunit 2 (1037 aa).

Basic and acidic residues-rich tracts occupy residues 316 to 334 and 376 to 391; these read EEQQ…EDGH and SSIK…KLEK. 2 disordered regions span residues 316-353 and 376-439; these read EEQQ…FGKS and SSIK…ANAD. ARM repeat units follow at residues 477–516, 518–557, 528–570, 615–654, 656–695, 739–778, 821–860, 864–903, 905–944, and 946–985; these read ETCQ…EISH, PQIR…NVAK, GGLP…QHGG, HSNK…ECAS, ENYR…QCAE, KENV…ECCQ, PESM…PCIE, DAGE…NIAK, QENL…RCCM, and GRNR…QLSE. Position 545 is an N6-methyllysine (Lys545).

Component of the outer dynein arm-docking complex along with ODAD1, ODAD3, and ODAD4. Interacts with CFAP61. In terms of tissue distribution, highly expressed in testis. In males, also detected at lower levels in lung, brain, liver and muscle. In females, detected in ovary.

Its subcellular location is the cytoplasm. The protein localises to the cytoskeleton. The protein resides in the cilium axoneme. It is found in the cilium basal body. Its function is as follows. Component of the outer dynein arm-docking complex (ODA-DC) that mediates outer dynein arms (ODA) binding onto the doublet microtubule. Involved in mediating assembly of both ODAs and their axonemal docking complex onto ciliary microtubules. The sequence is that of Outer dynein arm-docking complex subunit 2 from Mus musculus (Mouse).